A 53-amino-acid chain; its full sequence is Large ribosomal subunit protein eL40 (53 aa).

The protein belongs to the eukaryotic ribosomal protein eL40 family.

In Pyrobaculum neutrophilum (strain DSM 2338 / JCM 9278 / NBRC 100436 / V24Sta) (Thermoproteus neutrophilus), this protein is Large ribosomal subunit protein eL40.